The following is a 61-amino-acid chain: Metallothionein-1 (61 aa).

Methionine 1 is modified (N-acetylmethionine). The tract at residues 1 to 29 (MDPNCSCPTGGSCTCAGSCKCKACRCPSC) is beta. A divalent metal cation-binding residues include cysteine 5, cysteine 7, cysteine 13, cysteine 15, cysteine 19, cysteine 21, cysteine 24, cysteine 26, cysteine 29, cysteine 33, cysteine 34, cysteine 36, cysteine 37, cysteine 41, cysteine 44, cysteine 48, cysteine 50, cysteine 57, cysteine 59, and cysteine 60. Residues 30–61 (KKSCCSCCPVGCAKCAQGCVCKGASDKCSCCA) are alpha.

This sequence belongs to the metallothionein superfamily. Type 1 family. As to quaternary structure, monomer.

Metallothioneins have a high content of cysteine residues that bind various heavy metals; these proteins are transcriptionally regulated by both heavy metals and glucocorticoids. In Bos taurus (Bovine), this protein is Metallothionein-1 (MT1).